The primary structure comprises 271 residues: MKVSDRRKFEKANFDEFESALNNKNDLVHCPSITLFESIPTEVRSFYEDEKSGLIKVVKFRTGAMDRKRSFEKIVVSVMVGKNVQKFLTFVEDEPDFQGGPIPSKYLIPKKINLMVYTLFQVHTLKFNRKDYDTLSLFYLNRGYYNELSFRVLERCHEIASARPNDSSTMRTFTDFVSGAPIVRSLQKSTIRKYGYNLAPHMFLLLHVDELSIFSAYQASLPGEKKVDTERLKRDLCPRKPTEIKYFSQICNDMMNKKDRLGDVLHVCCPS.

This is an uncharacterized protein from Saccharomyces cerevisiae (strain ATCC 204508 / S288c) (Baker's yeast).